Consider the following 156-residue polypeptide: Small ribosomal subunit protein uS7 (156 aa).

The protein belongs to the universal ribosomal protein uS7 family. As to quaternary structure, part of the 30S ribosomal subunit. Contacts proteins S9 and S11.

In terms of biological role, one of the primary rRNA binding proteins, it binds directly to 16S rRNA where it nucleates assembly of the head domain of the 30S subunit. Is located at the subunit interface close to the decoding center, probably blocks exit of the E-site tRNA. This is Small ribosomal subunit protein uS7 from Clostridioides difficile (strain 630) (Peptoclostridium difficile).